The chain runs to 175 residues: COMPASS component SDC1 (175 aa).

Positions 1 to 12 are enriched in polar residues; it reads MNESENSPQHNE. The interval 1-45 is disordered; that stretch reads MNESENSPQHNEVTVPMVEDTSSNADIPMEQIQREDNKNYDKHDN. Basic and acidic residues predominate over residues 32–45; that stretch reads IQREDNKNYDKHDN. The DPY-30 stretch occupies residues 121-162; that stretch reads QTRKYLNTNVTPHLLAGMRLIAVQQPEDPLRVLGEYLIEQSN.

The protein belongs to the dpy-30 family. In terms of assembly, component of the Set1C/COMPASS complex which consists of SET1(2), BRE2(2), SPP1(2), SDC1(1), SHG1(1), SWD1(1), SWD2(1), and SWD3(1). Interacts directly with BRE2.

The protein resides in the nucleus. Functionally, component of the Set1C/COMPASS complex that specifically mono-, di- and trimethylates histone H3 to form H3K4me1/2/3, which subsequently plays a role in telomere length maintenance and transcription elongation regulation. COMPASS recognizes ubiquitinated H2B on one face of the nucleosome which stimulates the methylation of H3 on the opposing face. The chain is COMPASS component SDC1 from Saccharomyces cerevisiae (strain ATCC 204508 / S288c) (Baker's yeast).